The sequence spans 80 residues: Waprin-Phi3 (80 aa).

The N-terminal stretch at 1 to 22 (MKPWILLLLAGLLILSTQLTTA) is a signal peptide. A WAP domain is found at 31–78 (PKVKPGECPKVKIPPDYPCNQYCVWDFDCEGNKKCCPVGCAKECFPPG). 4 disulfide bridges follow: Cys-38–Cys-66, Cys-49–Cys-70, Cys-53–Cys-65, and Cys-59–Cys-74.

It belongs to the venom waprin family. As to expression, expressed by the venom gland.

It is found in the secreted. In terms of biological role, damages membranes of susceptible bacteria. Has no hemolytic activity. Not toxic to mice. Does not inhibit the proteinases elastase and cathepsin G. The sequence is that of Waprin-Phi3 from Philodryas olfersii (Green snake).